Reading from the N-terminus, the 382-residue chain is Glutamyl-tRNA reductase (382 aa).

Residues T38–R41, S85, E90–Q92, and Q96 contribute to the substrate site. The active-site Nucleophile is C39. NADP(+) is bound at residue G164–G169.

Belongs to the glutamyl-tRNA reductase family. In terms of assembly, homodimer.

It carries out the reaction (S)-4-amino-5-oxopentanoate + tRNA(Glu) + NADP(+) = L-glutamyl-tRNA(Glu) + NADPH + H(+). Its pathway is porphyrin-containing compound metabolism; protoporphyrin-IX biosynthesis; 5-aminolevulinate from L-glutamyl-tRNA(Glu): step 1/2. Its function is as follows. Catalyzes the NADPH-dependent reduction of glutamyl-tRNA(Glu) to glutamate 1-semialdehyde (GSA). This is Glutamyl-tRNA reductase from Methanococcus maripaludis (strain C6 / ATCC BAA-1332).